A 1206-amino-acid polypeptide reads, in one-letter code: Pre-mRNA-splicing factor prp12 (1206 aa).

This sequence belongs to the RSE1 family. Belongs to the 40S cdc5-associated complex (or cwf complex), a spliceosome sub-complex reminiscent of a late-stage spliceosome composed of the U2, U5 and U6 snRNAs and at least brr2, cdc5, cwf2/prp3, cwf3/syf1, cwf4/syf3, cwf5/ecm2, spp42/cwf6, cwf7/spf27, cwf8, cwf9, cwf10, cwf11, cwf12, prp45/cwf13, cwf14, cwf15, cwf16, cwf17, cwf18, cwf19, cwf20, cwf21, cwf22, cwf23, cwf24, cwf25, cwf26, cyp7/cwf27, cwf28, cwf29/ist3, lea1, msl1, prp5/cwf1, prp10, prp12/sap130, prp17, prp22, sap61, sap62, sap114, sap145, slu7, smb1, smd1, smd3, smf1, smg1 and syf2.

The protein localises to the nucleus. In terms of biological role, involved in mRNA splicing and G2/M transition. This Schizosaccharomyces pombe (strain 972 / ATCC 24843) (Fission yeast) protein is Pre-mRNA-splicing factor prp12 (prp12).